An 85-amino-acid polypeptide reads, in one-letter code: Toxin AahP1005 (85 aa).

Positions 1 to 19 (MNYLVMISLALLFMTGVES) are cleaved as a signal peptide. The LCN-type CS-alpha/beta domain maps to 21-83 (KDGYIVDDKN…VSTKKKGGCN (63 aa)). Intrachain disulfides connect cysteine 31–cysteine 82, cysteine 35–cysteine 55, cysteine 41–cysteine 65, and cysteine 45–cysteine 67. Asparagine 83 is modified (asparagine amide).

The protein belongs to the long (4 C-C) scorpion toxin superfamily. Sodium channel inhibitor family. Alpha subfamily. As to expression, expressed by the venom gland.

Its subcellular location is the secreted. Alpha toxins bind voltage-independently at site-3 of sodium channels (Nav) and inhibit the inactivation of the activated channels, thereby blocking neuronal transmission. The polypeptide is Toxin AahP1005 (Androctonus australis (Sahara scorpion)).